The chain runs to 201 residues: Regulator of G-protein signaling 1 (201 aa).

The RGS domain maps to 75–191 (SLEKLLVSEE…LKSEIFFRLA (117 aa)).

It localises to the cell membrane. The protein localises to the cytoplasm. Its subcellular location is the cytosol. Functionally, regulates G protein-coupled receptor signaling cascades, including signaling downstream of the N-formylpeptide chemoattractant receptors and leukotriene receptors. Inhibits B cell chemotaxis. Inhibits signal transduction by increasing the GTPase activity of G protein alpha subunits, thereby driving them into their inactive GDP-bound form. The chain is Regulator of G-protein signaling 1 (rgs1) from Xenopus laevis (African clawed frog).